The following is a 335-amino-acid chain: Nucleoid-associated protein PputW619_4243 (335 aa).

The protein belongs to the YejK family.

The protein resides in the cytoplasm. The protein localises to the nucleoid. In Pseudomonas putida (strain W619), this protein is Nucleoid-associated protein PputW619_4243.